The chain runs to 309 residues: DnaJ protein ERDJ7 (309 aa).

Residues 1–36 (MSQVGSAGEGSNSMAAAPPPRLLLLVVLLLVPVSNA) form the signal peptide. Topologically, residues 37–130 (IYCEEDDCYD…YRAYYGHKTD (94 aa)) are lumenal. Residues 43–107 (DCYDLLGVKQ…STRGQYDYAI (65 aa)) enclose the J domain. The N-linked (GlcNAc...) asparagine glycan is linked to N55. Residues 131–151 (PRAVLIGLLLIISAFQYLNQF) form a helical membrane-spanning segment. The Cytoplasmic portion of the chain corresponds to 152-219 (GRYSKAIETV…GVEKPSLWRL (68 aa)). A helical transmembrane segment spans residues 220-242 (YGVQFILLPYSIGKVLSWKFCWF). Residues 243–309 (WRYRIKKLPY…EMRKESKRRR (67 aa)) lie on the Lumenal side of the membrane.

Its subcellular location is the endoplasmic reticulum membrane. Its function is as follows. May play a role in protein folding in the endoplasmic reticulum. The protein is DnaJ protein ERDJ7 of Oryza sativa subsp. japonica (Rice).